The chain runs to 242 residues: Fibrinolytic enzyme, isozyme C (242 aa).

The Peptidase S1 domain maps to 1–242 (VIGGTNASPG…YLGWIGDNSR (242 aa)). Cysteines 29 and 45 form a disulfide. Active-site charge relay system residues include histidine 44 and aspartate 93. 3 cysteine pairs are disulfide-bonded: cysteine 127/cysteine 197, cysteine 158/cysteine 176, and cysteine 187/cysteine 219. The active-site Charge relay system is the serine 191.

This sequence belongs to the peptidase S1 family.

In Lumbricus rubellus (Humus earthworm), this protein is Fibrinolytic enzyme, isozyme C.